The primary structure comprises 184 residues: Protein GrpE (184 aa).

The tract at residues 1–24 is disordered; that stretch reads MADEQLDEKNLNSEEAGAVNGDAR.

It belongs to the GrpE family. Homodimer.

It is found in the cytoplasm. Participates actively in the response to hyperosmotic and heat shock by preventing the aggregation of stress-denatured proteins, in association with DnaK and GrpE. It is the nucleotide exchange factor for DnaK and may function as a thermosensor. Unfolded proteins bind initially to DnaJ; upon interaction with the DnaJ-bound protein, DnaK hydrolyzes its bound ATP, resulting in the formation of a stable complex. GrpE releases ADP from DnaK; ATP binding to DnaK triggers the release of the substrate protein, thus completing the reaction cycle. Several rounds of ATP-dependent interactions between DnaJ, DnaK and GrpE are required for fully efficient folding. This Pseudomonas entomophila (strain L48) protein is Protein GrpE.